Reading from the N-terminus, the 941-residue chain is Heat shock protein 70 homolog (941 aa).

The tract at residues 851–887 (ENQPDIPEDSEDSESEDDTTTSKDSESSEITENLALP) is disordered. Residues 856–869 (IPEDSEDSESEDDT) are compositionally biased toward acidic residues.

It belongs to the heat shock protein 70 family.

In terms of biological role, probable chaperone. This Acanthamoeba polyphaga (Amoeba) protein is Heat shock protein 70 homolog.